A 205-amino-acid polypeptide reads, in one-letter code: MIVQFFNRGKGGGSGPIDYLLGKDRDREEARLLRGDPEETAALINSSDYAKKYTAGCLSFEESNIPAEQKHALMDSFEECIFAGLDKDQYNCLWVEHRDKGRLELNFVIPNIELLSGKRLQPYYYAADRGRVDAWRTMQNLTHGYSDPDDPAKRQSMTQAKDLPRNTQEAAQSITEHHRRLRSPSPIRQAKKPRRRAGNAGKGRF.

The disordered stretch occupies residues Thr-142–Phe-205. Positions Gln-155–Ile-174 are enriched in polar residues. Residues Gln-189–Phe-205 are compositionally biased toward basic residues.

The chain is Cryptic plasmid protein C (cppC) from Neisseria gonorrhoeae.